The sequence spans 238 residues: Ribose-5-phosphate isomerase A (238 aa).

Substrate is bound by residues 30–33 (SGST), 87–90 (DGAD), and 100–103 (KGGG). Residue Glu109 is the Proton acceptor of the active site. Lys127 provides a ligand contact to substrate.

It belongs to the ribose 5-phosphate isomerase family. Homodimer.

It carries out the reaction aldehydo-D-ribose 5-phosphate = D-ribulose 5-phosphate. It participates in carbohydrate degradation; pentose phosphate pathway; D-ribose 5-phosphate from D-ribulose 5-phosphate (non-oxidative stage): step 1/1. Its function is as follows. Catalyzes the reversible conversion of ribose-5-phosphate to ribulose 5-phosphate. This is Ribose-5-phosphate isomerase A from Prochlorococcus marinus (strain MIT 9303).